A 946-amino-acid chain; its full sequence is Bifunctional glutamine synthetase adenylyltransferase/adenylyl-removing enzyme (946 aa).

The adenylyl removase stretch occupies residues 1-440 (MKPLSSPLQQ…VFNELIGDDE (440 aa)). Positions 449–946 (SEQWRELWQD…ASWQKWLVEE (498 aa)) are adenylyl transferase.

The protein belongs to the GlnE family. Mg(2+) serves as cofactor.

It catalyses the reaction [glutamine synthetase]-O(4)-(5'-adenylyl)-L-tyrosine + phosphate = [glutamine synthetase]-L-tyrosine + ADP. The catalysed reaction is [glutamine synthetase]-L-tyrosine + ATP = [glutamine synthetase]-O(4)-(5'-adenylyl)-L-tyrosine + diphosphate. Its function is as follows. Involved in the regulation of glutamine synthetase GlnA, a key enzyme in the process to assimilate ammonia. When cellular nitrogen levels are high, the C-terminal adenylyl transferase (AT) inactivates GlnA by covalent transfer of an adenylyl group from ATP to specific tyrosine residue of GlnA, thus reducing its activity. Conversely, when nitrogen levels are low, the N-terminal adenylyl removase (AR) activates GlnA by removing the adenylyl group by phosphorolysis, increasing its activity. The regulatory region of GlnE binds the signal transduction protein PII (GlnB) which indicates the nitrogen status of the cell. The protein is Bifunctional glutamine synthetase adenylyltransferase/adenylyl-removing enzyme of Escherichia coli (strain SE11).